Here is a 203-residue protein sequence, read N- to C-terminus: Peptidyl-tRNA hydrolase (203 aa).

Tyr-26 is a tRNA binding site. Catalysis depends on His-31, which acts as the Proton acceptor. Residues Tyr-82, Asn-84, and Asn-130 each coordinate tRNA.

The protein belongs to the PTH family. Monomer.

It localises to the cytoplasm. It catalyses the reaction an N-acyl-L-alpha-aminoacyl-tRNA + H2O = an N-acyl-L-amino acid + a tRNA + H(+). Functionally, hydrolyzes ribosome-free peptidyl-tRNAs (with 1 or more amino acids incorporated), which drop off the ribosome during protein synthesis, or as a result of ribosome stalling. In terms of biological role, catalyzes the release of premature peptidyl moieties from peptidyl-tRNA molecules trapped in stalled 50S ribosomal subunits, and thus maintains levels of free tRNAs and 50S ribosomes. The chain is Peptidyl-tRNA hydrolase from Streptomyces avermitilis (strain ATCC 31267 / DSM 46492 / JCM 5070 / NBRC 14893 / NCIMB 12804 / NRRL 8165 / MA-4680).